Reading from the N-terminus, the 470-residue chain is Poly(A) polymerase catalytic subunit (470 aa).

Active-site residues include D192 and D194.

Belongs to the poxviridae poly(A) polymerase catalytic subunit family. In terms of assembly, heterodimer of a large (catalytic) subunit and a small (regulatory) subunit.

It catalyses the reaction RNA(n) + ATP = RNA(n)-3'-adenine ribonucleotide + diphosphate. In terms of biological role, polymerase that creates the 3'-poly(A) tail of mRNA's. The chain is Poly(A) polymerase catalytic subunit (PAPL) from Odocoileus hemionus (Mule deer).